Here is a 172-residue protein sequence, read N- to C-terminus: NADH-quinone oxidoreductase subunit B (172 aa).

[4Fe-4S] cluster contacts are provided by Cys-52, Cys-53, Cys-117, and Cys-147.

The protein belongs to the complex I 20 kDa subunit family. NDH-1 is composed of 14 different subunits. Subunits NuoB, C, D, E, F, and G constitute the peripheral sector of the complex. It depends on [4Fe-4S] cluster as a cofactor.

The protein localises to the cell inner membrane. It catalyses the reaction a quinone + NADH + 5 H(+)(in) = a quinol + NAD(+) + 4 H(+)(out). Its function is as follows. NDH-1 shuttles electrons from NADH, via FMN and iron-sulfur (Fe-S) centers, to quinones in the respiratory chain. Couples the redox reaction to proton translocation (for every two electrons transferred, four hydrogen ions are translocated across the cytoplasmic membrane), and thus conserves the redox energy in a proton gradient. The protein is NADH-quinone oxidoreductase subunit B of Ehrlichia ruminantium (strain Gardel).